We begin with the raw amino-acid sequence, 486 residues long: Protein DETOXIFICATION 53 (486 aa).

Transmembrane regions (helical) follow at residues 15–35 (CPIVMTSLLIFSRSIISMWFL), 45–65 (GGALAMGFGNITGVSVLKGLS), 94–114 (LLIVVSVPIAVTWLNIEPIFL), 130–150 (MLFFVPELLAQAMLHPLRTFL), 159–179 (LTISAIVSILLHPLFNYVFVV), 187–207 (GVAIAMAFNTMNIDVGLLVYT), 240–260 (AISVCLEYWWYEIMLFLCGLL), 267–287 (VAAMGILIQTTGILYVVPFAI), 312–332 (VIGLILAVAYGLAAAVFVTAL), 346–366 (ILGLISAALPILGLCEIGNSP), 386–406 (VNLCAFYIVGLPVAVTTTFGF), and 413–433 (LWFGLLSAQMTCLVMMLYTLI). The disordered stretch occupies residues 448–474 (TSAAADKSHSEDETVHAEVQDDDDVSS). Basic and acidic residues predominate over residues 453–466 (DKSHSEDETVHAEV).

This sequence belongs to the multi antimicrobial extrusion (MATE) (TC 2.A.66.1) family.

It is found in the membrane. The polypeptide is Protein DETOXIFICATION 53 (Arabidopsis thaliana (Mouse-ear cress)).